We begin with the raw amino-acid sequence, 153 residues long: Ribosome maturation factor RimP (153 aa).

Belongs to the RimP family.

It is found in the cytoplasm. Required for maturation of 30S ribosomal subunits. This is Ribosome maturation factor RimP from Coxiella burnetii (strain CbuG_Q212) (Coxiella burnetii (strain Q212)).